The primary structure comprises 475 residues: tRNA-2-methylthio-N(6)-dimethylallyladenosine synthase (475 aa).

An MTTase N-terminal domain is found at 2-119; the sequence is AKLHITTWGC…LPEMINKIRG (118 aa). [4Fe-4S] cluster-binding residues include Cys11, Cys48, Cys82, Cys156, Cys160, and Cys163. The 233-residue stretch at 142–374 folds into the Radical SAM core domain; it reads RAEGPTAFVS…QQRINHQAMQ (233 aa). Positions 377 to 440 constitute a TRAM domain; that stretch reads RAMLGTEQRV…TNSLRGEVVR (64 aa).

This sequence belongs to the methylthiotransferase family. MiaB subfamily. Monomer. The cofactor is [4Fe-4S] cluster.

Its subcellular location is the cytoplasm. The enzyme catalyses N(6)-dimethylallyladenosine(37) in tRNA + (sulfur carrier)-SH + AH2 + 2 S-adenosyl-L-methionine = 2-methylsulfanyl-N(6)-dimethylallyladenosine(37) in tRNA + (sulfur carrier)-H + 5'-deoxyadenosine + L-methionine + A + S-adenosyl-L-homocysteine + 2 H(+). In terms of biological role, catalyzes the methylthiolation of N6-(dimethylallyl)adenosine (i(6)A), leading to the formation of 2-methylthio-N6-(dimethylallyl)adenosine (ms(2)i(6)A) at position 37 in tRNAs that read codons beginning with uridine. This chain is tRNA-2-methylthio-N(6)-dimethylallyladenosine synthase, found in Actinobacillus pleuropneumoniae serotype 3 (strain JL03).